Here is a 397-residue protein sequence, read N- to C-terminus: Guanine nucleotide-binding protein G(s) subunit alpha (397 aa).

Residues 1–23 are disordered; that stretch reads MGCLGNSKTEDQRNEEKAQREAN. Gly-2 carries the N-palmitoyl glycine lipid modification. A lipid anchor (S-palmitoyl cysteine) is attached at Cys-3. Residues 8 to 23 show a composition bias toward basic and acidic residues; that stretch reads KTEDQRNEEKAQREAN. The G-alpha domain occupies 39–397; that stretch reads ATHRLLLLGA…RMHLRQYELL (359 aa). A G1 motif region spans residues 42–55; sequence RLLLLGAGESGKST. Residues 47–55, 182–189, 208–212, 277–280, and Ala-369 each bind GTP; these read GAGESGKST, LLRCRVLT, DVGGQ, and NKQD. Residues Ser-54 and Thr-189 each contribute to the Mg(2+) site. The interval 181–189 is G2 motif; it reads DLLRCRVLT. Positions 204 to 213 are G3 motif; that stretch reads FHMFDVGGQR. A G4 motif region spans residues 273 to 280; sequence ILFLNKQD. The tract at residues 367-372 is G5 motif; the sequence is TCAVDT.

The protein belongs to the G-alpha family. G(s) subfamily. Heterotrimeric G proteins are composed of 3 units; alpha, beta and gamma. The alpha chain contains the guanine nucleotide binding site. Interacts with CRY1; the interaction may block GPCR-mediated regulation of cAMP concentrations. Interacts with ADCY6 and stimulates its adenylyl cyclase activity. Interacts with ADCY2 and ADCY5. Stimulates the ADCY5 adenylyl cyclase activity. Interaction with SASH1.

The protein localises to the cell membrane. In terms of biological role, guanine nucleotide-binding proteins (G proteins) function as transducers in numerous signaling pathways controlled by G protein-coupled receptors (GPCRs). Signaling involves the activation of adenylyl cyclases, resulting in increased levels of the signaling molecule cAMP. GNAS functions downstream of several GPCRs, including beta-adrenergic receptors. Stimulates the Ras signaling pathway via RAPGEF2. This is Guanine nucleotide-binding protein G(s) subunit alpha (GNAS) from Sus scrofa (Pig).